Reading from the N-terminus, the 567-residue chain is Monodechloroaminopyrrolnitrin halogenase PrnC (567 aa).

The protein operates within antibiotic biosynthesis. Involved in the biosynthesis of the antifungal antibiotic pyrrolnitrin. Catalyzes the chlorination of monodechloroaminopyrrolnitrin (MDA) at the 3 position to form aminopyrrolnitrin (APRN). This chain is Monodechloroaminopyrrolnitrin halogenase PrnC (prnC), found in Pseudomonas fluorescens.